Here is a 476-residue protein sequence, read N- to C-terminus: uncharacterized protein (476 aa).

Helical transmembrane passes span 4–24, 81–101, 141–161, 174–194, 207–227, 233–253, 300–320, 351–371, 391–411, and 414–434; these read FFSF…LFGA, ALAI…AAFI, WMGV…FSGV, FDFP…LAIT, FVPL…VMNI, VIWS…GAAG, MIGI…LILL, FVTL…YIYA, ICTF…MWQL, and IIMA…SPVV.

The protein belongs to the alanine or glycine:cation symporter (AGCS) (TC 2.A.25) family.

The protein resides in the cell inner membrane. This is an uncharacterized protein from Escherichia coli (strain K12).